A 79-amino-acid chain; its full sequence is Acyl carrier protein (79 aa).

Residues 2–77 (SEVADKVKKI…DAVEYIEKQK (76 aa)) enclose the Carrier domain. Ser37 carries the O-(pantetheine 4'-phosphoryl)serine modification.

The protein belongs to the acyl carrier protein (ACP) family. 4'-phosphopantetheine is transferred from CoA to a specific serine of apo-ACP by AcpS. This modification is essential for activity because fatty acids are bound in thioester linkage to the sulfhydryl of the prosthetic group.

It localises to the cytoplasm. It functions in the pathway lipid metabolism; fatty acid biosynthesis. Functionally, carrier of the growing fatty acid chain in fatty acid biosynthesis. In Granulibacter bethesdensis (strain ATCC BAA-1260 / CGDNIH1), this protein is Acyl carrier protein.